The following is a 258-amino-acid chain: Global transcriptional regulator CodY (258 aa).

The segment at 1-156 (MSTLLDKTRK…SATIVGLEIL (156 aa)) is GAF domain. The segment at residues 204–223 (ASKIADKVGITRSVIVNALR) is a DNA-binding region (H-T-H motif).

It belongs to the CodY family.

The protein localises to the cytoplasm. Its function is as follows. DNA-binding global transcriptional regulator which is involved in the adaptive response to starvation and acts by directly or indirectly controlling the expression of numerous genes in response to nutrient availability. During rapid exponential growth, CodY is highly active and represses genes whose products allow adaptation to nutrient depletion. The polypeptide is Global transcriptional regulator CodY (Clostridium kluyveri (strain NBRC 12016)).